Reading from the N-terminus, the 408-residue chain is Dual-specificity RNA methyltransferase RlmN (408 aa).

Glutamate 120 functions as the Proton acceptor in the catalytic mechanism. A Radical SAM core domain is found at 126 to 375; it reads EEGRGTLCIS…IRTPRGRDIL (250 aa). Cysteine 133 and cysteine 378 are oxidised to a cystine. [4Fe-4S] cluster contacts are provided by cysteine 140, cysteine 144, and cysteine 147. Residues 204 to 205, serine 236, 258 to 260, and asparagine 335 contribute to the S-adenosyl-L-methionine site; these read GE and SLH. Residue cysteine 378 is the S-methylcysteine intermediate of the active site.

It belongs to the radical SAM superfamily. RlmN family. [4Fe-4S] cluster is required as a cofactor.

It localises to the cytoplasm. The enzyme catalyses adenosine(2503) in 23S rRNA + 2 reduced [2Fe-2S]-[ferredoxin] + 2 S-adenosyl-L-methionine = 2-methyladenosine(2503) in 23S rRNA + 5'-deoxyadenosine + L-methionine + 2 oxidized [2Fe-2S]-[ferredoxin] + S-adenosyl-L-homocysteine. It catalyses the reaction adenosine(37) in tRNA + 2 reduced [2Fe-2S]-[ferredoxin] + 2 S-adenosyl-L-methionine = 2-methyladenosine(37) in tRNA + 5'-deoxyadenosine + L-methionine + 2 oxidized [2Fe-2S]-[ferredoxin] + S-adenosyl-L-homocysteine. In terms of biological role, specifically methylates position 2 of adenine 2503 in 23S rRNA and position 2 of adenine 37 in tRNAs. m2A2503 modification seems to play a crucial role in the proofreading step occurring at the peptidyl transferase center and thus would serve to optimize ribosomal fidelity. In Rhizobium johnstonii (strain DSM 114642 / LMG 32736 / 3841) (Rhizobium leguminosarum bv. viciae), this protein is Dual-specificity RNA methyltransferase RlmN.